Here is a 335-residue protein sequence, read N- to C-terminus: UPF0353 protein BCG_1543 (335 aa).

2 helical membrane-spanning segments follow: residues 18–38 and 67–87; these read WFFL…LMQL and VPAI…AGPT. The VWFA domain maps to 98-294; that stretch reads VVMLVIDVSQ…AELRAVYSSL (197 aa). Residues 309 to 329 traverse the membrane as a helical segment; it reads VGWLRLGALALALAALAALLI.

This sequence belongs to the UPF0353 family.

Its subcellular location is the cell membrane. This is UPF0353 protein BCG_1543 from Mycobacterium bovis (strain BCG / Pasteur 1173P2).